Here is a 228-residue protein sequence, read N- to C-terminus: 2,3-bisphosphoglycerate-dependent phosphoglycerate mutase (228 aa).

Substrate is bound by residues 7–14 (RHGESAWN), 20–21 (TG), R59, 86–89 (ERHY), K97, 113–114 (RR), and 182–183 (GN). The active-site Tele-phosphohistidine intermediate is H8. Catalysis depends on E86, which acts as the Proton donor/acceptor.

It belongs to the phosphoglycerate mutase family. BPG-dependent PGAM subfamily.

It catalyses the reaction (2R)-2-phosphoglycerate = (2R)-3-phosphoglycerate. It participates in carbohydrate degradation; glycolysis; pyruvate from D-glyceraldehyde 3-phosphate: step 3/5. Functionally, catalyzes the interconversion of 2-phosphoglycerate and 3-phosphoglycerate. This chain is 2,3-bisphosphoglycerate-dependent phosphoglycerate mutase, found in Fusobacterium nucleatum subsp. nucleatum (strain ATCC 25586 / DSM 15643 / BCRC 10681 / CIP 101130 / JCM 8532 / KCTC 2640 / LMG 13131 / VPI 4355).